A 468-amino-acid chain; its full sequence is ATP synthase subunit beta (468 aa).

155–162 is a binding site for ATP; it reads GGAGVGKT.

Belongs to the ATPase alpha/beta chains family. As to quaternary structure, F-type ATPases have 2 components, CF(1) - the catalytic core - and CF(0) - the membrane proton channel. CF(1) has five subunits: alpha(3), beta(3), gamma(1), delta(1), epsilon(1). CF(0) has three main subunits: a(1), b(2) and c(9-12). The alpha and beta chains form an alternating ring which encloses part of the gamma chain. CF(1) is attached to CF(0) by a central stalk formed by the gamma and epsilon chains, while a peripheral stalk is formed by the delta and b chains.

It localises to the cell membrane. The enzyme catalyses ATP + H2O + 4 H(+)(in) = ADP + phosphate + 5 H(+)(out). Its function is as follows. Produces ATP from ADP in the presence of a proton gradient across the membrane. The catalytic sites are hosted primarily by the beta subunits. The sequence is that of ATP synthase subunit beta from Streptococcus pneumoniae (strain Taiwan19F-14).